The chain runs to 500 residues: Lysine--tRNA ligase (500 aa).

Mg(2+) is bound by residues Glu406 and Glu413.

It belongs to the class-II aminoacyl-tRNA synthetase family. Homodimer. Mg(2+) is required as a cofactor.

It is found in the cytoplasm. The catalysed reaction is tRNA(Lys) + L-lysine + ATP = L-lysyl-tRNA(Lys) + AMP + diphosphate. This is Lysine--tRNA ligase from Sulfolobus acidocaldarius (strain ATCC 33909 / DSM 639 / JCM 8929 / NBRC 15157 / NCIMB 11770).